The sequence spans 138 residues: Basic phospholipase A2 homolog TM-N49 (138 aa).

The signal sequence occupies residues 1–16 (MRTLWIMAVLLLGVEG). Intrachain disulfides connect Cys-42-Cys-131, Cys-44-Cys-60, Cys-59-Cys-111, Cys-65-Cys-138, Cys-66-Cys-104, Cys-73-Cys-97, and Cys-91-Cys-102.

This sequence belongs to the phospholipase A2 family. Group II subfamily. N49 sub-subfamily. Homodimer; non-covalently linked. Expressed by the venom gland.

Its subcellular location is the secreted. In terms of biological role, snake venom phospholipase A2 (PLA2) that exhibits potent myotoxic activity causing inflammatory cell infiltration, severe myoedema, myonecrosis and myolysis in the gastrocnemius muscles of BALB/c mice. The protein is Basic phospholipase A2 homolog TM-N49 of Protobothrops mucrosquamatus (Taiwan habu).